The chain runs to 331 residues: Ketol-acid reductoisomerase (NADP(+)) (331 aa).

The 180-residue stretch at 2 to 181 folds into the KARI N-terminal Rossmann domain; the sequence is IKKYYESDAD…GATRAVVFET (180 aa). Residues 25–28, R48, S52, and 82–85 contribute to the NADP(+) site; these read YGSQ and DESQ. H107 is a catalytic residue. NADP(+) is bound at residue G133. The KARI C-terminal knotted domain occupies 182 to 327; it reads TFREETETDL…AEIRGLMPQF (146 aa). D190, E194, E226, and E230 together coordinate Mg(2+). S251 lines the substrate pocket.

Belongs to the ketol-acid reductoisomerase family. It depends on Mg(2+) as a cofactor.

It carries out the reaction (2R)-2,3-dihydroxy-3-methylbutanoate + NADP(+) = (2S)-2-acetolactate + NADPH + H(+). The enzyme catalyses (2R,3R)-2,3-dihydroxy-3-methylpentanoate + NADP(+) = (S)-2-ethyl-2-hydroxy-3-oxobutanoate + NADPH + H(+). It participates in amino-acid biosynthesis; L-isoleucine biosynthesis; L-isoleucine from 2-oxobutanoate: step 2/4. The protein operates within amino-acid biosynthesis; L-valine biosynthesis; L-valine from pyruvate: step 2/4. In terms of biological role, involved in the biosynthesis of branched-chain amino acids (BCAA). Catalyzes an alkyl-migration followed by a ketol-acid reduction of (S)-2-acetolactate (S2AL) to yield (R)-2,3-dihydroxy-isovalerate. In the isomerase reaction, S2AL is rearranged via a Mg-dependent methyl migration to produce 3-hydroxy-3-methyl-2-ketobutyrate (HMKB). In the reductase reaction, this 2-ketoacid undergoes a metal-dependent reduction by NADPH to yield (R)-2,3-dihydroxy-isovalerate. The chain is Ketol-acid reductoisomerase (NADP(+)) from Methanosphaerula palustris (strain ATCC BAA-1556 / DSM 19958 / E1-9c).